Reading from the N-terminus, the 576-residue chain is Acyl-CoA ligase sidI (576 aa).

The PTS2-type peroxisomal targeting signal motif lies at 3–11 (PVTTKTIRP). Aspartate 439, arginine 454, and lysine 553 together coordinate ATP.

Belongs to the ATP-dependent AMP-binding enzyme family.

It localises to the peroxisome. The protein operates within siderophore biosynthesis. Acyl-CoA ligase; part of the gene cluster that mediates the biosynthesis of at least 11 siderophores, including beauverichelin A, dimerumic acid (DA), Na-dimethyl coprogen (NADC), eleutherazine B, ferricrocin (FC), fusarinine A, fusarinine C (FsC), metachelin A, mevalonolactone, rhodotorulic acid (RA) and tenellin. This cocktail of siderophores for iron metabolism is essential for virulence, and more specifically for the fungal virulence in penetrating through the host cuticle. Siderophore synthesis is also involved in conidial germination under iron-deficient conditions. For biosynthesis of fusarinine C, the transacylase SIDF transfers anhydromevalonyl to N(5)-hydroxyornithine. The required anhydromevalonyl-CoA moiety is derived from mevalonate by CoA ligation and dehydration catalyzed by SIDI and sidH respectively. The protein is Acyl-CoA ligase sidI of Beauveria bassiana (strain ARSEF 2860) (White muscardine disease fungus).